Consider the following 104-residue polypeptide: Protein ORF3 (104 aa).

The Nuclear export signal signature appears at 1–35 (MVTIPPLVSRWFPVCGFRVCKISSPFAFTTPRWPH). Residues 78-104 (PALQQGTHSSRQVTPLSLRSRSSTFNK) form a disordered region.

As to quaternary structure, interacts with host RGS16.

The protein localises to the host cytoplasm. It is found in the host nucleus. Functionally, plays a role in modulating host cell signaling by binding to and degrading host RGS16. Not necessary for virus replication. This is Protein ORF3 from Sus scrofa (Pig).